The following is a 217-amino-acid chain: PTB-containing, cubilin and LRP1-interacting protein (217 aa).

Positions 60 to 217 (VTYLGKVSTT…ASQELESDDG (158 aa)) constitute a PID domain. The segment at 194-217 (KSDGRIHRSSSSEEASQELESDDG) is disordered. Residues serine 202, serine 203, and serine 214 each carry the phosphoserine modification. A compositionally biased stretch (acidic residues) spans 208-217 (ASQELESDDG).

Found in a complex with PID1/PCLI1, LRP1 and CUBNI. Interacts with LRP1 and CUBN.

It localises to the cytoplasm. Increases proliferation of preadipocytes without affecting adipocytic differentiation. The chain is PTB-containing, cubilin and LRP1-interacting protein (Pid1) from Mus musculus (Mouse).